The following is a 215-amino-acid chain: Elongation factor Ts (215 aa).

Residues 80 to 83 form an involved in Mg(2+) ion dislocation from EF-Tu region; it reads TDFV.

Belongs to the EF-Ts family.

Its subcellular location is the cytoplasm. In terms of biological role, associates with the EF-Tu.GDP complex and induces the exchange of GDP to GTP. It remains bound to the aminoacyl-tRNA.EF-Tu.GTP complex up to the GTP hydrolysis stage on the ribosome. The chain is Elongation factor Ts from Alkaliphilus metalliredigens (strain QYMF).